Consider the following 234-residue polypeptide: Immune-associated nucleotide-binding protein 2 (234 aa).

The 203-residue stretch at 21–223 (KPVKNIVLVG…YTEDMYRNIK (203 aa)) folds into the AIG1-type G domain. GTP is bound by residues 30–38 (GRSVNGICT), Ser51, and Asn183.

The protein belongs to the TRAFAC class TrmE-Era-EngA-EngB-Septin-like GTPase superfamily. AIG1/Toc34/Toc159-like paraseptin GTPase family. IAN subfamily. Mostly expressed in pollen. Also detected in lateral roots and radicles.

The sequence is that of Immune-associated nucleotide-binding protein 2 from Arabidopsis thaliana (Mouse-ear cress).